The sequence spans 87 residues: Cell division topological specificity factor (87 aa).

The protein belongs to the MinE family.

Prevents the cell division inhibition by proteins MinC and MinD at internal division sites while permitting inhibition at polar sites. This ensures cell division at the proper site by restricting the formation of a division septum at the midpoint of the long axis of the cell. In Roseiflexus castenholzii (strain DSM 13941 / HLO8), this protein is Cell division topological specificity factor.